The primary structure comprises 508 residues: Glycogen synthase (508 aa).

An ADP-alpha-D-glucose-binding site is contributed by Lys-27.

This sequence belongs to the glycosyltransferase 1 family. Bacterial/plant glycogen synthase subfamily.

It catalyses the reaction [(1-&gt;4)-alpha-D-glucosyl](n) + ADP-alpha-D-glucose = [(1-&gt;4)-alpha-D-glucosyl](n+1) + ADP + H(+). The protein operates within glycan biosynthesis; glycogen biosynthesis. In terms of biological role, synthesizes alpha-1,4-glucan chains using ADP-glucose. This is Glycogen synthase from Photobacterium profundum (strain SS9).